We begin with the raw amino-acid sequence, 91 residues long: uncharacterized protein (91 aa).

The next 3 membrane-spanning stretches (helical) occupy residues Tyr4–Gly21, Ile28–Val50, and Val60–Leu82.

It is found in the cell membrane. This is an uncharacterized protein from Archaeoglobus fulgidus (strain ATCC 49558 / DSM 4304 / JCM 9628 / NBRC 100126 / VC-16).